A 65-amino-acid polypeptide reads, in one-letter code: Conotoxin Am6.4 (65 aa).

Residues 1–33 form a disordered region; that stretch reads STGKRNAGKLTVTDDVEADRDTDPDDKDPSVHN. A propeptide spanning residues 1–36 is cleaved from the precursor; the sequence is STGKRNAGKLTVTDDVEADRDTDPDDKDPSVHNSWR. The span at 14–26 shows a compositional bias: acidic residues; it reads DDVEADRDTDPDD. 3 disulfides stabilise this stretch: Cys-40–Cys-50, Cys-45–Cys-59, and Cys-49–Cys-64.

Post-translationally, is not hydroxylated. In terms of tissue distribution, expressed by the venom duct.

It is found in the secreted. In terms of biological role, probable toxin that inhibits ion channels. This chain is Conotoxin Am6.4, found in Conus amadis (Amadis cone).